The chain runs to 1687 residues: Zinc finger protein 142 (1687 aa).

2 disordered regions span residues 1–23 (MTDPLLDSQPASSTGEMDGLCPE) and 83–150 (TLTP…RLEG). A compositionally biased stretch (basic and acidic residues) spans 125-140 (KEEKSDTQKDSQKAVD). A Phosphoserine modification is found at serine 154. C2H2-type zinc fingers lie at residues 163-185 (HMCPECKRCFKKRTHLVEHLHLH), 219-242 (HHCPLCHYSAVERNALNRHMASMH), and 253-275 (YACPVCREEFRLSQALKEHLKSH). A C2H2-type 4; atypical zinc finger spans residues 286–311 (LRCFQEGCSYAAPDRKAFIKHLKETH). 10 C2H2-type zinc fingers span residues 316-340 (VECRHHSCPMLFATAEAMEAHHKSH), 343-366 (FHCPHCDFACSNKHLFRKHKKQGH), 372-395 (LRCTFCPFATFNPVAYQDHVGKMH), 401-423 (HQCPECNFATAHKRVLIRHMLLH), 429-451 (HKCELCDFTCRDVSYLSKHMLTH), 457-479 (YMCTECGYVTKWKHYLRVHMRKH), 485-507 (YQCNQCSYRCHRADQLSSHKLRH), 512-536 (LMCEVCAFACKRKYELQKHMASQHH), 544-567 (YPCHYCSYQSRHKQAVLSHENCKH), and 573-596 (FHCALCDYRTFSNTTLLFHKRKAH). Residue lysine 594 forms a Glycyl lysine isopeptide (Lys-Gly) (interchain with G-Cter in SUMO2) linkage. Disordered stretches follow at residues 613 to 690 (EPEG…EVEE), 704 to 798 (LESV…PPLP), 897 to 935 (KGLPRPDSPIPLQPVLPGTQASEDTESGKPPPASQEAEL), 947 to 1014 (REPE…SPTE), and 1052 to 1092 (GRGG…GDGD). The segment covering 725–739 (PLGLEGPDGLEGPEL) has biased composition (low complexity). Positions 1061 to 1075 (TPQTQPDVSPLSNGD) are enriched in polar residues. The span at 1082–1092 (GSTESSSGDGD) shows a compositional bias: low complexity. 15 C2H2-type zinc fingers span residues 1135–1158 (LHCSLCPFTAPAATALRLHQKRRH), 1171–1194 (LQCGDCGFTCKQSRCMQQHRRLKH), 1200–1222 (HQCPFCDFSTTRRYRLEAHQSRH), 1228–1251 (IPCSSCPQTFGTNSKLRLHRLRVH), 1257–1280 (HFCPLCDYSGYLRHDITRHVNSCH), 1286–1309 (FACSQCEAQFSSETALKQHALRRH), 1328–1351 (LHCSRCGLLCPSPASLRGHTRKQH), 1354–1377 (LECGACQEAFPSRLALDEHRRQQH), 1380–1403 (HRCQLCDFAARERVGLVKHYLEQH), 1424–1446 (LHCPFCDFTCRHQLVLDHHVKGH), 1452–1474 (YKCTDCAYSTKNRQKITWHSRIH), 1480–1502 (YHCHLCPYACADPSRLKYHMRIH), 1508–1530 (YLCPECGYKCKWVNQLKYHMTKH), 1536–1559 (YQCPECEYCTNRADALRVHQETRH), and 1565–1587 (FMCEQCGKAFKTRFLLRTHLRKH). Residue lysine 1193 forms a Glycyl lysine isopeptide (Lys-Gly) (interchain with G-Cter in SUMO2) linkage. Lysine 1242 is covalently cross-linked (Glycyl lysine isopeptide (Lys-Gly) (interchain with G-Cter in SUMO2)). Residue lysine 1591 forms a Glycyl lysine isopeptide (Lys-Gly) (interchain with G-Cter in SUMO2) linkage. 2 C2H2-type zinc fingers span residues 1593–1615 (YVCNVCHRAFRWAAGLRHHALTH) and 1621–1643 (FFCRLCNYKAKQKFQVVKHVRRH). Residues 1638 to 1687 (KHVRRHHPDQADPNQGVGKDPTTPTVHLHDVQLEDPSPPAPAAPHTGPEG) form a disordered region.

The protein belongs to the krueppel C2H2-type zinc-finger protein family.

The protein localises to the nucleus. Functionally, may be involved in transcriptional regulation. The chain is Zinc finger protein 142 from Homo sapiens (Human).